Here is a 162-residue protein sequence, read N- to C-terminus: Ribosome maturation factor RimP (162 aa).

The protein belongs to the RimP family.

It localises to the cytoplasm. Functionally, required for maturation of 30S ribosomal subunits. The protein is Ribosome maturation factor RimP of Leptospira interrogans serogroup Icterohaemorrhagiae serovar copenhageni (strain Fiocruz L1-130).